Reading from the N-terminus, the 520-residue chain is MKNLTSFVIVILLQSLLFHVYGRHQSSSKNILVDSSPFPSDFLFGTASSAYQYEGAFLTDGKSLNNWDVFTHKNPGKILDKNNADRAVDQYNRFLEDIQLMSFLGVNSYRFSISWCRILPRGRFGEINYLGIKYYNIFIDALISRGIKPFVTLNHVDYPQELEDRFQSWLNPEMQKEFGYLADICFKHFGNRVKYWTTLNEPNQQLILGYLTGKFPPSRCSSPYGNCSQGNSETEPFIAAHNMILAHAKAVNIYKTKYQKEQKGSIGIVVQTSWFEPISDSNADKEAAERAQSFYSNWILDPVIYGKYPKEMVDILGPALPQFSSNEVKNLEKSRADFVGINHYTSYFIQDCLTSACNTGHGAFKAEGYALKLDRKGNVTIGELTDVNWQHIDPTGFHKMLNYLKDRYPNMPMFITENGFGDLQKPETTDKELLNDTKRIQYMSGYLEALQAAMRDGANVKGYFVWSLLDNFEWLFGYKVRFGLFHVDLTTLKRSPKQSASWYKNYIEEHVNRRDIVDNY.

A signal peptide spans 1-22 (MKNLTSFVIVILLQSLLFHVYG). Residue Asn3 is glycosylated (N-linked (GlcNAc...) asparagine). Residues Gln52, His155, and 200-201 (NE) each bind a beta-D-glucoside. Glu201 functions as the Proton donor in the catalytic mechanism. A disulfide bridge connects residues Cys220 and Cys227. The N-linked (GlcNAc...) asparagine glycan is linked to Asn226. An a beta-D-glucoside-binding site is contributed by Tyr344. An intrachain disulfide couples Cys352 to Cys357. Asn378 carries an N-linked (GlcNAc...) asparagine glycan. Glu417 serves as a coordination point for a beta-D-glucoside. The Nucleophile role is filled by Glu417. Asn435 carries an N-linked (GlcNAc...) asparagine glycan. Residues Trp466, 473–474 (EW), and Phe482 contribute to the a beta-D-glucoside site.

Belongs to the glycosyl hydrolase 1 family. As to expression, expressed in stems and siliques.

It catalyses the reaction Hydrolysis of terminal, non-reducing beta-D-glucosyl residues with release of beta-D-glucose.. Its function is as follows. Hydrolyzes p-nitrophenyl beta-D-glucoside and natural glucosides such as syringin, coniferin and p-coumaryl alcohol glucoside. May be involved in lignification by hydrolyzing monolignol glucosides. The chain is Beta-glucosidase 45 from Arabidopsis thaliana (Mouse-ear cress).